We begin with the raw amino-acid sequence, 305 residues long: NDP-polyphosphate phosphotransferase 1 (305 aa).

Belongs to the polyphosphate kinase 2 (PPK2) family. Class I subfamily.

It catalyses the reaction [phosphate](n) + ATP = [phosphate](n+1) + ADP. The catalysed reaction is [phosphate](n) + CTP = [phosphate](n+1) + CDP. The enzyme catalyses [phosphate](n) + GTP = [phosphate](n+1) + GDP. It carries out the reaction [phosphate](n) + UTP = [phosphate](n+1) + UDP. With respect to regulation, shows little dependence on metals. Uses inorganic polyphosphate (polyP) as a donor to convert NDP to NTP. PolyP hydrolysis is slightly faster with GDP, but it can also use ADP, CDP and UDP. The protein is NDP-polyphosphate phosphotransferase 1 of Ruegeria pomeroyi (strain ATCC 700808 / DSM 15171 / DSS-3) (Silicibacter pomeroyi).